The chain runs to 145 residues: 3-dehydroquinate dehydratase 2 (145 aa).

Residue Y22 is the Proton acceptor of the active site. Substrate contacts are provided by N73, H79, and D86. H101 serves as the catalytic Proton donor. Residues 102-103 (IS) and R112 contribute to the substrate site.

It belongs to the type-II 3-dehydroquinase family. In terms of assembly, homododecamer.

It carries out the reaction 3-dehydroquinate = 3-dehydroshikimate + H2O. It participates in metabolic intermediate biosynthesis; chorismate biosynthesis; chorismate from D-erythrose 4-phosphate and phosphoenolpyruvate: step 3/7. Its function is as follows. Catalyzes a trans-dehydration via an enolate intermediate. This chain is 3-dehydroquinate dehydratase 2 (aroQ2), found in Corynebacterium efficiens (strain DSM 44549 / YS-314 / AJ 12310 / JCM 11189 / NBRC 100395).